The chain runs to 453 residues: Succinate-semialdehyde dehydrogenase (acetylating) (453 aa).

Residue 188-193 (ATGGAG) participates in NADP(+) binding. C242 is an active-site residue.

In terms of assembly, homodimer.

The enzyme catalyses succinate semialdehyde + NADP(+) + CoA = succinyl-CoA + NADPH + H(+). Catalyzes the reduction of succinate semialdehyde to succinyl-CoA. The enzyme is specific for succinate semialdehyde and succinyl-CoA, and only shows low activity with palmitoyl-CoA. There is no activity with NAD(+) as cosubstrate. The chain is Succinate-semialdehyde dehydrogenase (acetylating) (sucD) from Clostridium kluyveri (strain ATCC 8527 / DSM 555 / NBRC 12016 / NCIMB 10680 / K1).